Consider the following 44-residue polypeptide: Non-structural protein 7b (44 aa).

A helical membrane pass occupies residues 9 to 29; that stretch reads FYLCFLAFLLFLVLIMLLIFW.

It localises to the host membrane. The polypeptide is Non-structural protein 7b (Bat coronavirus HKU3 (BtCoV)).